The following is a 531-amino-acid chain: Ultra-long-chain fatty acid omega-hydroxylase (531 aa).

At 1–22 the chain is on the lumenal side; that stretch reads MLPITDRLLHLLGLEKTAFRIY. The chain crosses the membrane as a helical span at residues 23-43; it reads AVSTLLLFLLFFLFRLLLRFL. Topologically, residues 44–531 are cytoplasmic; it reads RLCRSFYITC…LKVEPLPPRA (488 aa). Heme is bound by residues Glu-335 and Cys-475.

It belongs to the cytochrome P450 family. Heme is required as a cofactor.

It is found in the endoplasmic reticulum membrane. The protein localises to the microsome membrane. It catalyses the reaction triacontanoate + reduced [NADPH--hemoprotein reductase] + O2 = omega-hydroxy-triacontanoate + oxidized [NADPH--hemoprotein reductase] + H2O + H(+). It carries out the reaction an omega-methyl-ultra-long-chain fatty acid + reduced [NADPH--hemoprotein reductase] + O2 = an omega-hydroxy-ultra-long-chain fatty acid + oxidized [NADPH--hemoprotein reductase] + H2O + H(+). A cytochrome P450 monooxygenase involved in epidermal ceramide biosynthesis. Hydroxylates the terminal carbon (omega-hydroxylation) of ultra-long-chain fatty acyls (C28-C36) prior to ceramide synthesis. Contributes to the synthesis of three classes of omega-hydroxy-ultra-long chain fatty acylceramides having sphingosine, 6-hydroxysphingosine and phytosphingosine bases, all major lipid components that underlie the permeability barrier of the stratum corneum. Mechanistically, uses molecular oxygen inserting one oxygen atom into a substrate, and reducing the second into a water molecule, with two electrons provided by NADPH via cytochrome P450 reductase (CPR; NADPH-ferrihemoprotein reductase). This Homo sapiens (Human) protein is Ultra-long-chain fatty acid omega-hydroxylase.